The following is a 255-amino-acid chain: Protein BEAN1 (255 aa).

Residues 37-57 traverse the membrane as a helical segment; sequence VLVASAVIGVVITLSCITIIV. Positions 69 to 90 are enriched in basic residues; that stretch reads QRHHHRHRRHHHHHRHRRRRHR. 2 disordered regions span residues 69-109 and 160-255; these read QRHH…MPYA and DAPP…ERIV. Over residues 193–206 the composition is skewed to polar residues; sequence QRTQGQSRLHTVSM. Low complexity predominate over residues 217–226; it reads GTGSPSDLLP. Positions 234–243 are enriched in polar residues; that stretch reads PSNSQGSPIP. The span at 244–255 shows a compositional bias: pro residues; the sequence is TQAPMPSPERIV.

In terms of assembly, interacts with NEDD4.

Its subcellular location is the membrane. This is Protein BEAN1 (Bean1) from Mus musculus (Mouse).